The sequence spans 654 residues: Endoplasmic reticulum chaperone BiP (654 aa).

A signal peptide spans 1 to 18; sequence MKFTVVAAALLLLCAVRA. Positions 1–80 are required for interaction with ELAPOR1; that stretch reads MKFTVVAAAL…EGERLIGDAA (80 aa). Residue 36–39 coordinates ATP; the sequence is GTTY. Phosphoserine is present on serine 86. Lysine 96 lines the ATP pocket. At lysine 125 the chain carries N6-acetyllysine. The segment at 125–280 is nucleotide-binding (NBD); the sequence is KPYIQVDIGG…KKKTGKDVRK (156 aa). Tyrosine 160 is subject to 3'-nitrotyrosine. Residue lysine 213 is modified to N6-acetyllysine. 227–229 is an ATP binding site; that stretch reads GGT. At lysine 271 the chain carries N6-acetyllysine. Position 293–300 (293–300) interacts with ATP; that stretch reads EKAKRALS. At lysine 326 the chain carries N6-acetyllysine. A Glycyl lysine isopeptide (Lys-Gly) (interchain with G-Cter in SUMO2) cross-link involves residue lysine 352. N6-acetyllysine; alternate is present on lysine 353. Lysine 353 is covalently cross-linked (Glycyl lysine isopeptide (Lys-Gly) (interchain with G-Cter in SUMO1); alternate). 364–367 serves as a coordination point for ATP; sequence GSTR. An interdomain linker region spans residues 409–419; it reads QDTGDLVLLDV. The tract at residues 420-500 is substrate-binding (SBD); sequence CPLTLGIETV…PRGVPQIEVT (81 aa). Lysine 447 is modified (N6-succinyllysine). Arginine 492 carries the post-translational modification Omega-N-methylarginine. The residue at position 518 (threonine 518) is an O-AMP-threonine; alternate. Position 518 is a phosphothreonine; alternate (threonine 518). Lysine 585 carries the post-translational modification N6,N6,N6-trimethyllysine; by METTL21A; in vitro. Position 585 is an N6,N6-dimethyllysine; alternate (lysine 585). Lysine 585 carries the post-translational modification N6-methyllysine; alternate. An N6-methyllysine modification is found at lysine 591. Residues 631–654 form a disordered region; sequence ISKLYGSGGPPPTGEEDTSEKDEL. Residues threonine 643 and threonine 648 each carry the phosphothreonine modification. Positions 644–654 are enriched in acidic residues; it reads GEEDTSEKDEL. At serine 649 the chain carries Phosphoserine. A Prevents secretion from ER motif is present at residues 651-654; sequence KDEL.

It belongs to the heat shock protein 70 family. In terms of assembly, monomer and homooligomer; homooligomerization via the interdomain linker inactivates the chaperone activity and acts as a storage of HSPA5/BiP molecules. Interacts with DNAJC1 (via J domain). Component of an EIF2 complex at least composed of CELF1/CUGBP1, CALR, CALR3, EIF2S1, EIF2S2, HSP90B1 and HSPA5. Part of a large chaperone multiprotein complex comprising DNAJB11, HSP90B1, HSPA5, HYOU, PDIA2, PDIA4, PDIA6, PPIB, SDF2L1, UGGT1 and very small amounts of ERP29, but not, or at very low levels, CALR nor CANX. Interacts with TMEM132A and TRIM21. May form a complex with ERLEC1, OS9, SEL1L and SYVN1. Interacts with DNAJC10. Interacts with DNAJB9/ERdj4; leading to recruit HSPA5/BiP to ERN1/IRE1. Interacts with ERN1/IRE1 (via luminal domain); the interaction takes place following interaction with DNAJB9/ERdj4 and leads to inactivate ERN1/IRE1, the interaction also competitively inhibits ERN1 interaction with MANF. Interacts directly with MANF (via SAP domain); the interaction inhibits ATP binding to HSPA5/BiP and subsequent nucleotide exchange. Interacts with EIF2AK3/PERK (via luminal domain); interaction leads to inactivate EIF2AK3/PERK. Interacts with MX1. Interacts with METTL23. Interacts with CEMIP; the interaction induces calcium leakage from the endoplasmic reticulum and cell migration. Interacts with PCSK4 form; the interaction takes place in the endoplasmic reticulum. Interacts with CIPC. Interacts with CCDC88B (via C-terminus); the interaction opposes ERN1-mediated JNK activation, protecting against apoptosis. Interacts with INPP5K; necessary for INPP5K localization at the endoplasmic reticulum. Interacts with MANF; the interaction is direct. Interacts with LOXL2; leading to activate the ERN1/IRE1-XBP1 pathway of the unfolded protein response. Interacts with CLU under stressed condition; interaction increases CLU protein stability; facilitates its retrotranslocation and redistribution to the mitochondria; cooperatively suppress stress-induced apoptosis by stabilizing mitochondrial membrane integrity. Interacts with CCDC47. Interacts with CLN3. Interacts with ELAPOR1; may regulate the function of HSPA5 in apoptosis and cell proliferation. Interacts with CASP7. Interacts with ILDR2; the interaction stabilizes ILDR2 expression. Interacts with ADAM7. In unstressed cells, AMPylation at Thr-518 by FICD inactivates the chaperome activity: AMPylated form is locked in a relatively inert state and only weakly stimulated by J domain-containing proteins. In response to endoplasmic reticulum stress, de-AMPylation by the same protein, FICD, restores the chaperone activity.

The protein localises to the endoplasmic reticulum lumen. It localises to the melanosome. It is found in the cytoplasm. The protein resides in the cell surface. It catalyses the reaction ATP + H2O = ADP + phosphate + H(+). The chaperone activity is regulated by ATP-induced allosteric coupling of the nucleotide-binding (NBD) and substrate-binding (SBD) domains. In the ADP-bound and nucleotide-free (apo) states, the two domains have little interaction. In contrast, in the ATP-bound state the two domains are tightly coupled, which results in drastically accelerated kinetics in both binding and release of polypeptide substrates. J domain-containing co-chaperones (DNAJB9/ERdj4 or DNAJC10/ERdj5) stimulate the ATPase activity and are required for efficient substrate recognition by HSPA5/BiP. Homooligomerization inactivates participating HSPA5/BiP protomers and probably act as reservoirs to store HSPA5/BiP molecules when they are not needed by the cell. Endoplasmic reticulum chaperone that plays a key role in protein folding and quality control in the endoplasmic reticulum lumen. Involved in the correct folding of proteins and degradation of misfolded proteins via its interaction with DNAJC10/ERdj5, probably to facilitate the release of DNAJC10/ERdj5 from its substrate. Acts as a key repressor of the EIF2AK3/PERK and ERN1/IRE1-mediated unfolded protein response (UPR). In the unstressed endoplasmic reticulum, recruited by DNAJB9/ERdj4 to the luminal region of ERN1/IRE1, leading to disrupt the dimerization of ERN1/IRE1, thereby inactivating ERN1/IRE1. Also binds and inactivates EIF2AK3/PERK in unstressed cells. Accumulation of misfolded protein in the endoplasmic reticulum causes release of HSPA5/BiP from ERN1/IRE1 and EIF2AK3/PERK, allowing their homodimerization and subsequent activation. Plays an auxiliary role in post-translational transport of small presecretory proteins across endoplasmic reticulum (ER). May function as an allosteric modulator for SEC61 channel-forming translocon complex, likely cooperating with SEC62 to enable the productive insertion of these precursors into SEC61 channel. Appears to specifically regulate translocation of precursors having inhibitory residues in their mature region that weaken channel gating. May also play a role in apoptosis and cell proliferation. This is Endoplasmic reticulum chaperone BiP from Rattus norvegicus (Rat).